The chain runs to 402 residues: Deoxyguanosinetriphosphate triphosphohydrolase-like protein (402 aa).

The disordered stretch occupies residues 20 to 39; it reads PAFSRGRLVPEPESPTRTPF. Residues 73-217 form the HD domain; it reads RLTHTIEVAQ…AAIADDIAYN (145 aa).

It belongs to the dGTPase family. Type 2 subfamily.

The protein is Deoxyguanosinetriphosphate triphosphohydrolase-like protein of Brucella ovis (strain ATCC 25840 / 63/290 / NCTC 10512).